Here is a 312-residue protein sequence, read N- to C-terminus: tRNA dimethylallyltransferase (312 aa).

11–18 (GPTAVGKT) serves as a coordination point for ATP. A substrate-binding site is contributed by 13–18 (TAVGKT). Residues 159-163 (QRVLR) are interaction with substrate tRNA.

The protein belongs to the IPP transferase family. As to quaternary structure, monomer. Mg(2+) is required as a cofactor.

The catalysed reaction is adenosine(37) in tRNA + dimethylallyl diphosphate = N(6)-dimethylallyladenosine(37) in tRNA + diphosphate. Functionally, catalyzes the transfer of a dimethylallyl group onto the adenine at position 37 in tRNAs that read codons beginning with uridine, leading to the formation of N6-(dimethylallyl)adenosine (i(6)A). The protein is tRNA dimethylallyltransferase of Macrococcus caseolyticus (strain JCSC5402) (Macrococcoides caseolyticum).